A 234-amino-acid polypeptide reads, in one-letter code: Ribonuclease 3 (234 aa).

The RNase III domain maps to 6–134 (RKSLEERVGH…IVGALYLDGG (129 aa)). Glu-47 is a binding site for Mg(2+). The active site involves Asp-51. Residues Ser-120 and Glu-123 each coordinate Mg(2+). Glu-123 is an active-site residue. Residues 162 to 231 (DYKTRLQELV…AKNALEMKYK (70 aa)) form the DRBM domain.

This sequence belongs to the ribonuclease III family. In terms of assembly, homodimer. The cofactor is Mg(2+).

It localises to the cytoplasm. It carries out the reaction Endonucleolytic cleavage to 5'-phosphomonoester.. In terms of biological role, digests double-stranded RNA. Involved in the processing of primary rRNA transcript to yield the immediate precursors to the large and small rRNAs (23S and 16S). Processes some mRNAs, and tRNAs when they are encoded in the rRNA operon. Processes pre-crRNA and tracrRNA of type II CRISPR loci if present in the organism. The protein is Ribonuclease 3 of Bdellovibrio bacteriovorus (strain ATCC 15356 / DSM 50701 / NCIMB 9529 / HD100).